Reading from the N-terminus, the 1573-residue chain is Pentafunctional AROM polypeptide (1573 aa).

A 3-dehydroquinate synthase region spans residues 1–384 (MSNESNIITV…YEKHATVVSD (384 aa)). NAD(+) contacts are provided by residues 46 to 48 (DSN), 83 to 86 (ESSK), 114 to 116 (GGV), and D119. Residue R130 coordinates 7-phospho-2-dehydro-3-deoxy-D-arabino-heptonate. 139 to 140 (TT) contacts NAD(+). 2 residues coordinate 7-phospho-2-dehydro-3-deoxy-D-arabino-heptonate: D146 and K152. Position 161 (K161) interacts with NAD(+). N162 serves as a coordination point for 7-phospho-2-dehydro-3-deoxy-D-arabino-heptonate. NAD(+) is bound by residues 179–182 (FLHT) and N190. Zn(2+) is bound at residue E194. 7-phospho-2-dehydro-3-deoxy-D-arabino-heptonate-binding positions include 194-197 (EIIK) and K250. Residue E260 is the Proton acceptor; for 3-dehydroquinate synthase activity of the active site. Residues 264 to 268 (RNLLN) and H271 contribute to the 7-phospho-2-dehydro-3-deoxy-D-arabino-heptonate site. H271 is a binding site for Zn(2+). H275 serves as the catalytic Proton acceptor; for 3-dehydroquinate synthase activity. Residues H287 and K356 each contribute to the 7-phospho-2-dehydro-3-deoxy-D-arabino-heptonate site. Zn(2+) is bound at residue H287. An EPSP synthase region spans residues 397-843 (VDEFTKSSWD…WDVLHQSFGV (447 aa)). Residue C825 is the For EPSP synthase activity of the active site. The interval 863-1058 (NASIILIGMR…KTKKRSTFLT (196 aa)) is shikimate kinase. 870-877 (GMRGAGKT) contacts ATP. The 3-dehydroquinase stretch occupies residues 1059–1280 (LNYPRIEDAL…AAPGQLTVKQ (222 aa)). Catalysis depends on H1182, which acts as the Proton acceptor; for 3-dehydroquinate dehydratase activity. The Schiff-base intermediate with substrate; for 3-dehydroquinate dehydratase activity role is filled by K1211. A shikimate dehydrogenase region spans residues 1293-1573 (PEKFFLFGKP…FDAVYQKVIE (281 aa)).

It in the N-terminal section; belongs to the sugar phosphate cyclases superfamily. Dehydroquinate synthase family. In the 2nd section; belongs to the EPSP synthase family. The protein in the 3rd section; belongs to the shikimate kinase family. This sequence in the 4th section; belongs to the type-I 3-dehydroquinase family. It in the C-terminal section; belongs to the shikimate dehydrogenase family. Homodimer. Zn(2+) serves as cofactor.

The protein localises to the cytoplasm. It carries out the reaction 7-phospho-2-dehydro-3-deoxy-D-arabino-heptonate = 3-dehydroquinate + phosphate. The enzyme catalyses 3-dehydroquinate = 3-dehydroshikimate + H2O. The catalysed reaction is shikimate + NADP(+) = 3-dehydroshikimate + NADPH + H(+). It catalyses the reaction shikimate + ATP = 3-phosphoshikimate + ADP + H(+). It carries out the reaction 3-phosphoshikimate + phosphoenolpyruvate = 5-O-(1-carboxyvinyl)-3-phosphoshikimate + phosphate. Its pathway is metabolic intermediate biosynthesis; chorismate biosynthesis; chorismate from D-erythrose 4-phosphate and phosphoenolpyruvate: step 2/7. It functions in the pathway metabolic intermediate biosynthesis; chorismate biosynthesis; chorismate from D-erythrose 4-phosphate and phosphoenolpyruvate: step 3/7. It participates in metabolic intermediate biosynthesis; chorismate biosynthesis; chorismate from D-erythrose 4-phosphate and phosphoenolpyruvate: step 4/7. The protein operates within metabolic intermediate biosynthesis; chorismate biosynthesis; chorismate from D-erythrose 4-phosphate and phosphoenolpyruvate: step 5/7. Its pathway is metabolic intermediate biosynthesis; chorismate biosynthesis; chorismate from D-erythrose 4-phosphate and phosphoenolpyruvate: step 6/7. The AROM polypeptide catalyzes 5 consecutive enzymatic reactions in prechorismate polyaromatic amino acid biosynthesis. The polypeptide is Pentafunctional AROM polypeptide (Schizosaccharomyces pombe (strain 972 / ATCC 24843) (Fission yeast)).